Reading from the N-terminus, the 254-residue chain is RxLR effector protein CRE5 (254 aa).

Positions 1–19 (MQTIQLIIFVAFVLSRAAA) are cleaved as a signal peptide. N-linked (GlcNAc...) asparagine glycosylation occurs at Asn-49. Residues 53-63 (RSLRQHEGEDR) carry the RxLR-dEER motif. The Nudix hydrolase domain occupies 191–254 (SRWLSAGVVT…MEEGGVCRAL (64 aa)). The Nudix box signature appears at 228 to 249 (GGWDRGEKIKKAALREVMEEGG).

This sequence in the N-terminal section; belongs to the RxLR effector family. The protein in the C-terminal section; belongs to the Nudix hydrolase family.

It localises to the secreted. The protein localises to the host cytoplasm. It is found in the host nucleus. Its subcellular location is the host nucleolus. Its function is as follows. Effector that is involved in host plant infection. Contributes to virulence during the early infection stage, by inhibiting plant defense responses induced by both PAMP-triggered immunity (PTI) and effector-triggered immunity (ETI). In Phytophthora infestans (strain T30-4) (Potato late blight agent), this protein is RxLR effector protein CRE5.